The following is a 207-amino-acid chain: MEHQIITQNVYAPDTEAKLDVARKLFAQFDSNKNGTLDPSEVAGLIKTTFENMGVKDYSVTADDVKLYMKSVDVDNNGLVSYSEYEEYVIACLKKAGFDCEVKQKVKRSAKKRDAATEMKLDVARRLFAKYDSDKSGQLEEKEVYGVITETYKQMGMDYKPTEADVKLWMSMTDTDKNGTVSIVEYEDFVISGLKKAGFMVKEFTQA.

A Blocked amino end (Met) modification is found at M1. EF-hand domains follow at residues 17 to 52 (AKLDVARKLFAQFDSNKNGTLDPSEVAGLIKTTFEN), 60 to 95 (VTADDVKLYMKSVDVDNNGLVSYSEYEEYVIACLKK), 119 to 154 (MKLDVARRLFAKYDSDKSGQLEEKEVYGVITETYKQ), and 161 to 196 (PTEADVKLWMSMTDTDKNGTVSIVEYEDFVISGLKK). D30, N32, N34, T36, E41, D73, D75, N77, E84, D132, D134, S136, Q138, E143, D174, D176, N178, T180, and E185 together coordinate Ca(2+).

Expected to play a crucial role in calcium-dependent regulation of ciliary movement. This chain is 23 kDa calcium-binding protein, found in Tetrahymena thermophila.